A 197-amino-acid polypeptide reads, in one-letter code: Dephospho-CoA kinase (197 aa).

In terms of domain architecture, DPCK spans 2 to 197; sequence IIGLTGGIAS…GAIKDLANLV (196 aa). 10 to 15 provides a ligand contact to ATP; the sequence is ASGKST.

This sequence belongs to the CoaE family.

The protein localises to the cytoplasm. The catalysed reaction is 3'-dephospho-CoA + ATP = ADP + CoA + H(+). Its pathway is cofactor biosynthesis; coenzyme A biosynthesis; CoA from (R)-pantothenate: step 5/5. Functionally, catalyzes the phosphorylation of the 3'-hydroxyl group of dephosphocoenzyme A to form coenzyme A. The polypeptide is Dephospho-CoA kinase (Streptococcus thermophilus (strain ATCC BAA-250 / LMG 18311)).